Here is a 150-residue protein sequence, read N- to C-terminus: Large ribosomal subunit protein bL9 (150 aa).

This sequence belongs to the bacterial ribosomal protein bL9 family.

Its function is as follows. Binds to the 23S rRNA. The chain is Large ribosomal subunit protein bL9 from Paraburkholderia phytofirmans (strain DSM 17436 / LMG 22146 / PsJN) (Burkholderia phytofirmans).